A 292-amino-acid chain; its full sequence is Acetyl-coenzyme A carboxylase carboxyl transferase subunit beta (292 aa).

The CoA carboxyltransferase N-terminal domain maps to 36–292 (MWSKCEKCAK…LLRMHEVDYE (257 aa)). Zn(2+) contacts are provided by C40, C43, C59, and C62. The segment at 40-62 (CEKCAKILYTEDLRENFNVCPNC) adopts a C4-type zinc-finger fold.

This sequence belongs to the AccD/PCCB family. Acetyl-CoA carboxylase is a heterohexamer composed of biotin carboxyl carrier protein (AccB), biotin carboxylase (AccC) and two subunits each of ACCase subunit alpha (AccA) and ACCase subunit beta (AccD). Zn(2+) serves as cofactor.

The protein resides in the cytoplasm. The enzyme catalyses N(6)-carboxybiotinyl-L-lysyl-[protein] + acetyl-CoA = N(6)-biotinyl-L-lysyl-[protein] + malonyl-CoA. Its pathway is lipid metabolism; malonyl-CoA biosynthesis; malonyl-CoA from acetyl-CoA: step 1/1. Functionally, component of the acetyl coenzyme A carboxylase (ACC) complex. Biotin carboxylase (BC) catalyzes the carboxylation of biotin on its carrier protein (BCCP) and then the CO(2) group is transferred by the transcarboxylase to acetyl-CoA to form malonyl-CoA. The polypeptide is Acetyl-coenzyme A carboxylase carboxyl transferase subunit beta (Clostridium perfringens (strain ATCC 13124 / DSM 756 / JCM 1290 / NCIMB 6125 / NCTC 8237 / Type A)).